The primary structure comprises 570 residues: Sorting nexin-41 (570 aa).

2 disordered regions span residues 1-31 (MSDF…PSAS) and 81-115 (FDDG…TTAS). A compositionally biased stretch (polar residues) spans 84–101 (GSNSFSATPTASITNQND). Positions 98–236 (NQNDTAHEAT…RFLDPHASWS (139 aa)) constitute a PX domain. A 1,2-diacyl-sn-glycero-3-phospho-(1D-myo-inositol-3-phosphate)-binding residues include Arg153, Ser155, Lys179, and Arg202. Residues 429 to 498 (DSQRINDALG…ASRRQGIGKT (70 aa)) are disordered. The segment covering 440-454 (TRSNNGPSTTNSGEQ) has biased composition (polar residues). Low complexity predominate over residues 455-464 (PSASPAPKKS).

Belongs to the sorting nexin family.

It is found in the endosome membrane. The protein localises to the endomembrane system. In terms of biological role, may be required for cytoplasm to vacuole transport (Cvt) and pexophagy. This chain is Sorting nexin-41 (SNX41), found in Yarrowia lipolytica (strain CLIB 122 / E 150) (Yeast).